The chain runs to 37 residues: Large ribosomal subunit protein bL36 (37 aa).

It belongs to the bacterial ribosomal protein bL36 family.

The chain is Large ribosomal subunit protein bL36 from Pelotomaculum thermopropionicum (strain DSM 13744 / JCM 10971 / SI).